The following is a 115-amino-acid chain: Large ribosomal subunit protein uL18 (115 aa).

The tract at residues 1–20 is disordered; that stretch reads MKYTKQEARKRRHYRVRSKV. The segment covering 8–18 has biased composition (basic residues); that stretch reads ARKRRHYRVRS.

The protein belongs to the universal ribosomal protein uL18 family. Part of the 50S ribosomal subunit; part of the 5S rRNA/L5/L18/L25 subcomplex. Contacts the 5S and 23S rRNAs.

Its function is as follows. This is one of the proteins that bind and probably mediate the attachment of the 5S RNA into the large ribosomal subunit, where it forms part of the central protuberance. The chain is Large ribosomal subunit protein uL18 from Mesoplasma florum (strain ATCC 33453 / NBRC 100688 / NCTC 11704 / L1) (Acholeplasma florum).